We begin with the raw amino-acid sequence, 125 residues long: MMTDRTERRRRLTHAACTPSANNQRTTRLPPHPGFFSWSNPACDDGLFLYRTTVSRGVDTQRRRRSHPGFFSCRYHPSTVSLARRHRGPGKRISLRTEISKDADPISTVTETRWFLLNFQCIEPP.

This is an uncharacterized protein from Homo sapiens (Human).